The primary structure comprises 1581 residues: MEEYGDMFGDINLTIGMLSKEDNISKEDIYCHLTSFIQNTDIMDDAIVQRLIYYTSKDMRDEEIPRELRMLAGEVLVSLAAHDFNSVMYEVQSNFRILELPNEFVVLALAELATSYVSQSIPFMMMTLLTMQTMLRLVEDENMRQTFCIALENFSKSIYKYVNHWKDFPYPKLDANRLSDKIFMLFRYIMEKWAPQASPMHALAIIKAHGPTVSLLLHREDFCEFALSQISWLLLQYRDKENDFYITQSLKQILTAAVLYDIALPKNLRRSVLSSLLHQICKVPEPPIKENKLEASSCFLILAHANPVDLLDFFDEQIRSTNEAVRTGILTLLRSTINAEEPKFRNHTTSIEKTVKLVMGDLSVKVRKSTLLLIQTMCEKGYIEAREGWPLIDYIFSQFAMSNRNLENPIKSNSQEDENGEKSVQETSLEVLKSLDPLVIGMPQVLWPRILTYVVPKEYTGTLDYLFNIIRILIMAEEKKKRDIQESTALVVSTGAVKLPSPQQLLARLLVISILASLGQLCGAGAIGLLKIMPEIIHPKLAEMWKTRMPALLQPLEGSNASIVLWETMLLQLLKESLWKISDVAWTSQLSRDFSLQMGSYSNSSMEKKFLWKALGTTLASCQDKDFVSSQINEFLVTPSLLGDHRQGTTSILGFCAENHLDIVLNVLKTFQDKEKFFVNRCKGIFSGKKSLTKTDLILIYGAVALHAPKQQLLARLDQDIMGQILLLYGQCCQILGVSVINKDMDLQMSFTRSITEVGIAVQDAEDQKFQFTYKEMLIGSMLDLIKDEPLNTLASPVRWKVLIAIRYLSKLKPALSLNDHLNILEENIRRLLPLPPLEKLKSQGETDKDRERIEFLYERSMDALGKLLRSMIWDNTDAQNCEEMFNLLRMWLVSQKQWERERAFQVTSKVLTKDVEAPQNFRIGSLLGLLAPHSCDTLPTIRQAATSSTIGLLCAKGICQEVDRLQGLQEGLDSEDEQVQIKISSKIAKIVCKFIPSEEIQVFLEETLDGLETLDPLCTKACGIWMIAALKEHGALLEDQLLEILSTIYHHMPVLRQKEESFQFMLEAISQIASFHMDAVVNNLLQKPLPFDRDTKTLWKALAENPASSGKLMRALIKKLVARLEDDIAGTEAISVACAIYEVILTGAHITHLYPELFTLLLKLVSCSLGQKMPMSTLSQRRRVMQLGERQRFPDPCRLSTATLKCLQAQAMREGLAKESDEGDNLWTLLSNPDTHHIGVCALARSMAVWQHGVILDIMEHLLSSLTSSSENYRITGMAFFSELMKEPILWKHGNLRDVLIFMDQNARDSNAILRQMAIRGLGNTACGAPHKVRKYKQMMLECIIRGLYHLARTEVVCESLKALKKILELLTERDINFYFKEIVLQTRTFFEDEQDDVRLTAISLFEDLATLTGRRWKIFFAEEVKKSMISFLLHLWDPNPKIGAACRDVLVICIPFLGLQELYGLLDHLLERDLPRARDFYRQLCMKLSKKNQEILWILHTHSFTFFTSSWEMIRSAAVKLTDAIILHLTKRYVELLDREQLTMRLQALRQDPCISVQRAAEATLQTLLRRCKEISIPL.

16 HEAT repeats span residues 123–160 (FMMM…SIYK), 305–342 (ANPV…AEEP), 401–441 (MSNR…LVIG), 464–501 (DYLF…KLPS), 526–543 (AIGL…KLAE), 544–580 (MWKT…SLWK), 658–695 (ENHL…LTKT), 773–815 (TYKE…LKPA), 960–997 (CQEV…KFIP), 1017–1055 (PLCT…HMPV), 1112–1150 (KLMR…TGAH), 1153–1191 (HLYP…LGER), 1254–1291 (GVIL…EPIL), 1295–1332 (GNLR…GAPH), 1359–1379 (CESL…DINF), and 1380–1416 (YFKE…LTGR).

Found in a complex at least composed of MROH2B isoform 2, PRKACA isoform 2 and TCP11. Interacts with PRKACA isoform 2. Interacts with TCP11. Constitutively phosphorylated on serine and threonine residues in acrosomal region of the sperm head, midpiece and flagellar regions of noncapacitated spermatozoa. Phosphorylation on tyrosine residues increases upon sperm capacitation within the acrosomal and tail regions in a protein kinase A (PKA)-dependent signaling pathway. Expressed strongly in round spermatids and fully mature spermatozoa. Expressed weakly in pachytene spermatocytes (at protein level). Isoform 2 is specifically expressed in the testis. Isoform 2 is expressed in pachytene spermatocytes and round spermatids. Isoform 3 is weakly expressed in testis.

Its subcellular location is the cytoplasm. The protein resides in the cytoplasmic vesicle. It is found in the secretory vesicle. It localises to the acrosome. The protein localises to the cell projection. Its subcellular location is the cilium. The protein resides in the flagellum. Functionally, may play a role in the process of sperm capacitation. The polypeptide is Maestro heat-like repeat-containing protein family member 2B (Mus musculus (Mouse)).